The chain runs to 144 residues: Large ribosomal subunit protein uL13 (144 aa).

It belongs to the universal ribosomal protein uL13 family. Part of the 50S ribosomal subunit.

This protein is one of the early assembly proteins of the 50S ribosomal subunit, although it is not seen to bind rRNA by itself. It is important during the early stages of 50S assembly. The polypeptide is Large ribosomal subunit protein uL13 (Clostridium botulinum (strain Alaska E43 / Type E3)).